Reading from the N-terminus, the 729-residue chain is Phosphoribosylformylglycinamidine synthase subunit PurL (729 aa).

His-54 is an active-site residue. The ATP site is built by Tyr-57 and Lys-96. Glu-98 contacts Mg(2+). Substrate contacts are provided by residues 99–102 and Arg-121; that span reads SHNH. The active-site Proton acceptor is His-100. Asp-122 lines the Mg(2+) pocket. Gln-245 is a binding site for substrate. Asp-273 lines the Mg(2+) pocket. A substrate-binding site is contributed by 317–319; that stretch reads ETQ. ATP-binding residues include Asp-495 and Gly-532. A Mg(2+)-binding site is contributed by Asn-533. Ser-535 lines the substrate pocket.

This sequence belongs to the FGAMS family. As to quaternary structure, monomer. Part of the FGAM synthase complex composed of 1 PurL, 1 PurQ and 2 PurS subunits.

The protein resides in the cytoplasm. The enzyme catalyses N(2)-formyl-N(1)-(5-phospho-beta-D-ribosyl)glycinamide + L-glutamine + ATP + H2O = 2-formamido-N(1)-(5-O-phospho-beta-D-ribosyl)acetamidine + L-glutamate + ADP + phosphate + H(+). It functions in the pathway purine metabolism; IMP biosynthesis via de novo pathway; 5-amino-1-(5-phospho-D-ribosyl)imidazole from N(2)-formyl-N(1)-(5-phospho-D-ribosyl)glycinamide: step 1/2. In terms of biological role, part of the phosphoribosylformylglycinamidine synthase complex involved in the purines biosynthetic pathway. Catalyzes the ATP-dependent conversion of formylglycinamide ribonucleotide (FGAR) and glutamine to yield formylglycinamidine ribonucleotide (FGAM) and glutamate. The FGAM synthase complex is composed of three subunits. PurQ produces an ammonia molecule by converting glutamine to glutamate. PurL transfers the ammonia molecule to FGAR to form FGAM in an ATP-dependent manner. PurS interacts with PurQ and PurL and is thought to assist in the transfer of the ammonia molecule from PurQ to PurL. The polypeptide is Phosphoribosylformylglycinamidine synthase subunit PurL (Staphylococcus epidermidis (strain ATCC 12228 / FDA PCI 1200)).